The primary structure comprises 461 residues: Fumarate hydratase class II (461 aa).

Substrate contacts are provided by residues 97 to 99 (SGT), 127 to 130 (HPND), 137 to 139 (SSN), and Thr185. His186 (proton donor/acceptor) is an active-site residue. Ser316 is an active-site residue. Residues Ser317 and 322–324 (KVN) contribute to the substrate site.

The protein belongs to the class-II fumarase/aspartase family. Fumarase subfamily. In terms of assembly, homotetramer.

It is found in the cytoplasm. It catalyses the reaction (S)-malate = fumarate + H2O. The protein operates within carbohydrate metabolism; tricarboxylic acid cycle; (S)-malate from fumarate: step 1/1. Its function is as follows. Involved in the TCA cycle. Catalyzes the stereospecific interconversion of fumarate to L-malate. The protein is Fumarate hydratase class II of Staphylococcus haemolyticus (strain JCSC1435).